Consider the following 217-residue polypeptide: Peroxiredoxin Q, chloroplastic (217 aa).

Residues 1–66 constitute a chloroplast transit peptide; it reads MAFAASTACC…RRRAASTGIV (66 aa). One can recognise a Thioredoxin domain in the interval 70–217; that stretch reads VSKGSVPPNF…GETLKIIQNL (148 aa). The active-site Cysteine sulfenic acid (-SOH) intermediate is the cysteine 112. An intrachain disulfide couples cysteine 112 to cysteine 117.

It belongs to the peroxiredoxin family. BCP/PrxQ subfamily. As to quaternary structure, monomer.

The protein localises to the plastid. Its subcellular location is the chloroplast thylakoid lumen. It catalyses the reaction a hydroperoxide + [thioredoxin]-dithiol = an alcohol + [thioredoxin]-disulfide + H2O. Thiol-specific peroxidase that catalyzes the reduction of hydrogen peroxide and organic hydroperoxides to water and alcohols, respectively. Plays a role in cell protection against oxidative stress by detoxifying peroxides. This is Peroxiredoxin Q, chloroplastic (PRX1) from Triticum aestivum (Wheat).